We begin with the raw amino-acid sequence, 338 residues long: Bacteriochlorophyllide d C-20 methyltransferase (338 aa).

E147 lines the S-adenosyl-L-methionine pocket. Substrate is bound at residue H150. S-adenosyl-L-methionine is bound by residues G177, N200, 227-228 (DI), and 242-243 (CR). Y246 acts as the Nucleophile in catalysis. H290 lines the a bacteriochlorophyll d pocket.

This sequence belongs to the class I-like SAM-binding methyltransferase superfamily. Cation-independent O-methyltransferase family. As to quaternary structure, homodimer.

It catalyses the reaction a bacteriochlorophyllide d + S-adenosyl-L-methionine = a bacteriochlorophyllide c + S-adenosyl-L-homocysteine + H(+). The protein operates within porphyrin-containing compound metabolism; bacteriochlorophyll biosynthesis (light-independent). Functionally, involved in the biosynthesis of the major light-harvesting pigment bacteriochlorophyll c (BChlc), which confers a significant competitive advantage to green sulfur bacteria living at limiting red and near-infrared light intensities. Catalyzes the methylation at the C-20 position of the cyclic tetrapyrrole chlorin of bacteriochlorophyll d (BChld) to produce bacteriochlorophyll c (BChlc) using S-adenosylmethionine (SAM) as a methyl source. The sequence is that of Bacteriochlorophyllide d C-20 methyltransferase from Chlorobaculum tepidum (strain ATCC 49652 / DSM 12025 / NBRC 103806 / TLS) (Chlorobium tepidum).